The following is a 223-amino-acid chain: Small ribosomal subunit protein uS3 (223 aa).

The 69-residue stretch at 39–107 (VREFLHKKLA…PVQINIEEVR (69 aa)) folds into the KH type-2 domain.

It belongs to the universal ribosomal protein uS3 family. As to quaternary structure, part of the 30S ribosomal subunit. Forms a tight complex with proteins S10 and S14.

In terms of biological role, binds the lower part of the 30S subunit head. Binds mRNA in the 70S ribosome, positioning it for translation. This is Small ribosomal subunit protein uS3 from Francisella tularensis subsp. novicida (strain U112).